Here is a 287-residue protein sequence, read N- to C-terminus: Lectin 10 (287 aa).

Topologically, residues 1-11 are cytoplasmic; the sequence is MALSNLKSNRT. A helical transmembrane segment spans residues 12–31; sequence LSSSLITIFIISLFLQYHNI. The Extracellular portion of the chain corresponds to 32–287; it reads KSQSSWQSRQ…IINWSFESAL (256 aa). Residues Asn124, Asn147, Asn243, and Asn280 are each glycosylated (N-linked (GlcNAc...) asparagine).

The protein belongs to the leguminous lectin family.

The protein resides in the membrane. May be involved in arbuscular mycorrhizal (AM) symbiosis with AM fungi. The chain is Lectin 10 from Medicago truncatula (Barrel medic).